The sequence spans 220 residues: Large ribosomal subunit protein uL3 (220 aa).

Residues 130–156 (AIKRHGQSRGPMSHGSHFHRAPGSVGM) are disordered.

It belongs to the universal ribosomal protein uL3 family. Part of the 50S ribosomal subunit. Forms a cluster with proteins L14 and L19.

One of the primary rRNA binding proteins, it binds directly near the 3'-end of the 23S rRNA, where it nucleates assembly of the 50S subunit. This is Large ribosomal subunit protein uL3 from Staphylococcus aureus (strain Mu3 / ATCC 700698).